The chain runs to 329 residues: Ferredoxin--NAD(P)(+) reductase CarAd (329 aa).

Residues 2–92 form the 2Fe-2S ferredoxin-type domain; the sequence is YQLKIEGQAP…DLRIKVAVQD (91 aa). Residues C35, C40, C43, and C76 each contribute to the [2Fe-2S] cluster site. In terms of domain architecture, FAD-binding FR-type spans 100–200; sequence ISRMEAEVVE…TGPMGTSFFR (101 aa).

In terms of assembly, monomer. Carbazole 1,9a-dioxygenase complex consists of a terminal oxygenase component CarAa, a ferredoxin reductase component CarAd and a ferredoxin component CarAc. Requires [2Fe-2S] cluster as cofactor. FAD serves as cofactor.

The catalysed reaction is 2 reduced [2Fe-2S]-[ferredoxin] + NAD(+) + H(+) = 2 oxidized [2Fe-2S]-[ferredoxin] + NADH. The enzyme catalyses 2 reduced [2Fe-2S]-[ferredoxin] + NADP(+) + H(+) = 2 oxidized [2Fe-2S]-[ferredoxin] + NADPH. In terms of biological role, part of the multicomponent carbazole 1,9a-dioxygenase (CARDO), that converts carbazole (CAR) into 2-aminobiphenyl-2,3-diol. It can use both NAD and NADP as electron donors, but NAD is supposed to be the physiological electron donor. The chain is Ferredoxin--NAD(P)(+) reductase CarAd (carAd) from Metapseudomonas resinovorans (Pseudomonas resinovorans).